Reading from the N-terminus, the 183-residue chain is Guanylate kinase (183 aa).

In terms of domain architecture, Guanylate kinase-like spans 4–182; the sequence is GRVVVLTGPS…AITALEAAIF (179 aa). 11 to 18 is a binding site for ATP; it reads GPSGVGKG.

This sequence belongs to the guanylate kinase family.

The protein localises to the cytoplasm. The catalysed reaction is GMP + ATP = GDP + ADP. It carries out the reaction dZMP + ATP = dZDP + ADP. Its pathway is purine metabolism. Its function is as follows. Essential for recycling GMP and indirectly, cGMP. Functionally, (Microbial infection) Catalyzes the phosphorylation of dZMP to dZDP, when the bacterium is infected by a phage that produces the substrate for the synthesis of dZTP (2- amino-2'-deoxyadenosine 5'-triphosphate), which is then used by the phage as a DNA polymerase substrate. The protein is Guanylate kinase of Synechococcus sp. (strain ATCC 27144 / PCC 6301 / SAUG 1402/1) (Anacystis nidulans).